The primary structure comprises 242 residues: 7-cyano-7-deazaguanine synthase (242 aa).

The interval 1-25 is disordered; sequence MNSRKDKNSKGKNSDTKRKKSSQEN. ATP is bound at residue 32–42; it reads LSGGLDSTTCL. Residues Cys-212, Cys-221, Cys-224, and Cys-227 each contribute to the Zn(2+) site.

It belongs to the QueC family. Requires Zn(2+) as cofactor.

It catalyses the reaction 7-carboxy-7-deazaguanine + NH4(+) + ATP = 7-cyano-7-deazaguanine + ADP + phosphate + H2O + H(+). The protein operates within purine metabolism; 7-cyano-7-deazaguanine biosynthesis. In terms of biological role, catalyzes the ATP-dependent conversion of 7-carboxy-7-deazaguanine (CDG) to 7-cyano-7-deazaguanine (preQ(0)). This is 7-cyano-7-deazaguanine synthase from Leptospira borgpetersenii serovar Hardjo-bovis (strain JB197).